The sequence spans 395 residues: L-rhamnonate dehydratase (395 aa).

Substrate is bound by residues His23 and Arg49. The Mg(2+) site is built by Asp215, Glu241, and Glu269. Catalysis depends on His319, which acts as the Proton acceptor. A substrate-binding site is contributed by Glu339.

The protein belongs to the mandelate racemase/muconate lactonizing enzyme family. RhamD subfamily. In terms of assembly, homooctamer; tetramer of dimers. It depends on Mg(2+) as a cofactor.

The enzyme catalyses L-rhamnonate = 2-dehydro-3-deoxy-L-rhamnonate + H2O. Its function is as follows. Catalyzes the dehydration of L-rhamnonate to 2-keto-3-deoxy-L-rhamnonate (KDR). This chain is L-rhamnonate dehydratase (rhmD), found in Polaromonas sp. (strain JS666 / ATCC BAA-500).